The following is a 445-amino-acid chain: tRNA-2-methylthio-N(6)-dimethylallyladenosine synthase (445 aa).

The region spanning 13 to 129 is the MTTase N-terminal domain; sequence KKLFIKTYGC…LPAMARAGRG (117 aa). 6 residues coordinate [4Fe-4S] cluster: C22, C58, C92, C163, C167, and C170. The 235-residue stretch at 149-383 folds into the Radical SAM core domain; it reads TRRAPAAFLT…LTSQQKAAQE (235 aa). In terms of domain architecture, TRAM spans 383–445; that stretch reads EGMVGRELGV…PNSLAGVLAA (63 aa).

The protein belongs to the methylthiotransferase family. MiaB subfamily. Monomer. The cofactor is [4Fe-4S] cluster.

Its subcellular location is the cytoplasm. The catalysed reaction is N(6)-dimethylallyladenosine(37) in tRNA + (sulfur carrier)-SH + AH2 + 2 S-adenosyl-L-methionine = 2-methylsulfanyl-N(6)-dimethylallyladenosine(37) in tRNA + (sulfur carrier)-H + 5'-deoxyadenosine + L-methionine + A + S-adenosyl-L-homocysteine + 2 H(+). In terms of biological role, catalyzes the methylthiolation of N6-(dimethylallyl)adenosine (i(6)A), leading to the formation of 2-methylthio-N6-(dimethylallyl)adenosine (ms(2)i(6)A) at position 37 in tRNAs that read codons beginning with uridine. The chain is tRNA-2-methylthio-N(6)-dimethylallyladenosine synthase from Paracoccus denitrificans (strain Pd 1222).